We begin with the raw amino-acid sequence, 388 residues long: Succinate--CoA ligase [ADP-forming] subunit beta (388 aa).

In terms of domain architecture, ATP-grasp spans 9 to 244; the sequence is KQLFAEFGLP…PSQEDEREAH (236 aa). Residues lysine 46, 53 to 55, glutamate 99, serine 102, and glutamate 107 each bind ATP; that span reads GRG. Residues asparagine 199 and aspartate 213 each coordinate Mg(2+). Substrate contacts are provided by residues asparagine 264 and 321–323; that span reads GIV.

It belongs to the succinate/malate CoA ligase beta subunit family. As to quaternary structure, heterotetramer of two alpha and two beta subunits. The cofactor is Mg(2+).

It carries out the reaction succinate + ATP + CoA = succinyl-CoA + ADP + phosphate. It catalyses the reaction GTP + succinate + CoA = succinyl-CoA + GDP + phosphate. Its pathway is carbohydrate metabolism; tricarboxylic acid cycle; succinate from succinyl-CoA (ligase route): step 1/1. Its function is as follows. Succinyl-CoA synthetase functions in the citric acid cycle (TCA), coupling the hydrolysis of succinyl-CoA to the synthesis of either ATP or GTP and thus represents the only step of substrate-level phosphorylation in the TCA. The beta subunit provides nucleotide specificity of the enzyme and binds the substrate succinate, while the binding sites for coenzyme A and phosphate are found in the alpha subunit. The protein is Succinate--CoA ligase [ADP-forming] subunit beta of Vibrio atlanticus (strain LGP32) (Vibrio splendidus (strain Mel32)).